A 198-amino-acid polypeptide reads, in one-letter code: MAKVLVLYYSMYGHIETMARAVAEGASKVDGAEVVVKRVPETMSPQLFEKAGGKTQTAPVATPQELANYDAIIFGTPTRFGNMSGQMRTFLDQTGGLWASGALYGKLASVFSSTGTGGGQEQTITSTWTTLAHHGMVIVPIGYAAQELFDVSQVRGGTPYGATTIAGGDGSRQPSQEELSIARYQGEYVAGLAVKLNG.

The region spanning 4–189 (VLVLYYSMYG…SIARYQGEYV (186 aa)) is the Flavodoxin-like domain. FMN is bound by residues 10-15 (SMYGHI) and 78-80 (TRF). Tyr12 contacts NAD(+). Residue Trp98 coordinates substrate. Residues 113 to 118 (STGTGG) and His133 each bind FMN.

Belongs to the WrbA family. The cofactor is FMN.

The enzyme catalyses a quinone + NADH + H(+) = a quinol + NAD(+). It carries out the reaction a quinone + NADPH + H(+) = a quinol + NADP(+). In Escherichia coli O157:H7, this protein is NAD(P)H dehydrogenase (quinone).